A 293-amino-acid chain; its full sequence is MKRIFLFLITNLAVMVVLSATMRILGVDRFLTAQGLNLTGLLIFSAVIGFTGAIISLLMSKPMAKWSTGARVIDPNAPANQREAWLLDTVHQLADRAGIGRPEVAIYQGEPNAFATGAFRNDSLVAVSTGLLDSMTEEEVAAVLGHEVAHVANGDMVTLTLIQGVVNTFVVFLARVVGYFVDRAILKNERGVGLGYYATVIVCEIVFGILASIIVAWFSRQREYRADAGSAHLMGSREPMIRALARLGGLEPGELPKSFEASGISGKNGISAMFASHPPIQARIAALQHARLG.

Helical transmembrane passes span 4–24 and 38–58; these read IFLF…TMRI and LTGL…ISLL. A Zn(2+)-binding site is contributed by His-146. Glu-147 is a catalytic residue. Residue His-150 participates in Zn(2+) binding. The next 2 membrane-spanning stretches (helical) occupy residues 161-181 and 198-218; these read LIQG…GYFV and ATVI…VAWF. Zn(2+) is bound at residue Glu-223.

This sequence belongs to the peptidase M48B family. The cofactor is Zn(2+).

Its subcellular location is the cell inner membrane. This chain is Protease HtpX homolog, found in Bordetella parapertussis (strain 12822 / ATCC BAA-587 / NCTC 13253).